We begin with the raw amino-acid sequence, 317 residues long: NADPH-dependent D-xylose reductase (317 aa).

Residue Tyr47 is the Proton donor of the active site. His109 serves as a coordination point for substrate. NADP(+)-binding positions include 164 to 165, 213 to 222, and 269 to 279; these read SN, SSFGPQSFVE, and KSNNPDRLLSN.

The protein belongs to the aldo/keto reductase family.

The catalysed reaction is xylitol + NAD(+) = D-xylose + NADH + H(+). It carries out the reaction xylitol + NADP(+) = D-xylose + NADPH + H(+). The protein operates within carbohydrate metabolism; D-xylose degradation. Reduces D-xylose into xylitol. Preferentially utilizes NADPH as a cosubstrate. The protein is NADPH-dependent D-xylose reductase (XYL1) of Meyerozyma guilliermondii (strain ATCC 6260 / CBS 566 / DSM 6381 / JCM 1539 / NBRC 10279 / NRRL Y-324) (Yeast).